We begin with the raw amino-acid sequence, 396 residues long: Putative pyridoxal phosphate-dependent acyltransferase (396 aa).

111–112 (GF) serves as a coordination point for pyridoxal 5'-phosphate. A substrate-binding site is contributed by His136. Pyridoxal 5'-phosphate-binding positions include Ser186, 211-214 (DDAH), and 241-244 (TLSK). An N6-(pyridoxal phosphate)lysine modification is found at Lys244. Substrate is bound at residue Thr358.

This sequence belongs to the class-II pyridoxal-phosphate-dependent aminotransferase family. In terms of assembly, homodimer. Pyridoxal 5'-phosphate is required as a cofactor.

The protein is Putative pyridoxal phosphate-dependent acyltransferase of Bacillus cereus (strain ATCC 14579 / DSM 31 / CCUG 7414 / JCM 2152 / NBRC 15305 / NCIMB 9373 / NCTC 2599 / NRRL B-3711).